The chain runs to 164 residues: Polygalacturonase (164 aa).

It belongs to the glycosyl hydrolase 28 family.

The protein localises to the secreted. Its subcellular location is the cell wall. It carries out the reaction (1,4-alpha-D-galacturonosyl)n+m + H2O = (1,4-alpha-D-galacturonosyl)n + (1,4-alpha-D-galacturonosyl)m.. The chain is Polygalacturonase from Cupressus sempervirens (Italian cypress).